The primary structure comprises 149 residues: Large ribosomal subunit protein bL9 (149 aa).

The protein belongs to the bacterial ribosomal protein bL9 family.

Binds to the 23S rRNA. The protein is Large ribosomal subunit protein bL9 of Shewanella amazonensis (strain ATCC BAA-1098 / SB2B).